The chain runs to 226 residues: Fibrillarin-like rRNA/tRNA 2'-O-methyltransferase (226 aa).

Residues 82 to 83, 100 to 101, 125 to 126, and 145 to 148 contribute to the S-adenosyl-L-methionine site; these read TT, EF, DA, and DVAQ.

It belongs to the methyltransferase superfamily. Fibrillarin family. As to quaternary structure, interacts with nop5. Component of box C/D small ribonucleoprotein (sRNP) particles that contain rpl7ae, FlpA and nop5, plus a guide RNA.

In terms of biological role, involved in pre-rRNA and tRNA processing. Utilizes the methyl donor S-adenosyl-L-methionine to catalyze the site-specific 2'-hydroxyl methylation of ribose moieties in rRNA and tRNA. Site specificity is provided by a guide RNA that base pairs with the substrate. Methylation occurs at a characteristic distance from the sequence involved in base pairing with the guide RNA. The polypeptide is Fibrillarin-like rRNA/tRNA 2'-O-methyltransferase (Methanosarcina barkeri (strain Fusaro / DSM 804)).